The following is a 228-amino-acid chain: Protein ARV 2 (228 aa).

2 helical membrane passes run 37 to 57 (EVAD…LILH) and 80 to 100 (LLWK…LLLR). Asn107 is a glycosylation site (N-linked (GlcNAc...) asparagine). The next 3 helical transmembrane spans lie at 123-143 (VLSA…LMLV), 150-170 (ILLT…MPVW), and 176-196 (VIFI…KVMT).

It belongs to the ARV1 family. As to expression, restricted to tissues in which cells are actively dividing or expanding. Mostly expressed in roots and flowers, and, to a lower extent, in stems and leaves.

The protein localises to the endoplasmic reticulum membrane. In terms of biological role, mediator of sterol homeostasis involved in sterol uptake, trafficking and distribution into membranes. Also regulates the sphingolipid metabolism. The sequence is that of Protein ARV 2 from Arabidopsis thaliana (Mouse-ear cress).